The following is a 457-amino-acid chain: Argininosuccinate lyase (457 aa).

The protein belongs to the lyase 1 family. Argininosuccinate lyase subfamily.

It is found in the cytoplasm. It catalyses the reaction 2-(N(omega)-L-arginino)succinate = fumarate + L-arginine. It participates in amino-acid biosynthesis; L-arginine biosynthesis; L-arginine from L-ornithine and carbamoyl phosphate: step 3/3. In Cronobacter sakazakii (strain ATCC BAA-894) (Enterobacter sakazakii), this protein is Argininosuccinate lyase.